A 511-amino-acid chain; its full sequence is Glucans biosynthesis protein G (511 aa).

An N-terminal signal peptide occupies residues 1 to 22 (MMKMRWLSAAVMLTLYTSSSWA).

This sequence belongs to the OpgD/OpgG family.

It localises to the periplasm. The protein operates within glycan metabolism; osmoregulated periplasmic glucan (OPG) biosynthesis. Involved in the biosynthesis of osmoregulated periplasmic glucans (OPGs). This chain is Glucans biosynthesis protein G, found in Escherichia coli O81 (strain ED1a).